Reading from the N-terminus, the 173-residue chain is PTS system glucose-specific EIIA component (173 aa).

One can recognise a PTS EIIA type-1 domain in the interval aspartate 40–asparagine 144. Positions 77 and 92 each coordinate Zn(2+). The active-site Tele-phosphohistidine intermediate; for EIIA activity is histidine 92. Residue histidine 92 is modified to Phosphohistidine; by HPr.

Heterodimer with glycerol kinase (glpk). Zn(2+) is required as a cofactor.

It localises to the cytoplasm. Functionally, the phosphoenolpyruvate-dependent sugar phosphotransferase system (sugar PTS), a major carbohydrate active transport system, catalyzes the phosphorylation of incoming sugar substrates concomitantly with their translocation across the cell membrane. The enzyme II complex composed of PtsG and Crr is involved in glucose transport. This chain is PTS system glucose-specific EIIA component (crr), found in Halalkalibacterium halodurans (strain ATCC BAA-125 / DSM 18197 / FERM 7344 / JCM 9153 / C-125) (Bacillus halodurans).